A 318-amino-acid chain; its full sequence is Ethylene-responsive transcription factor FZP (318 aa).

Positions 1 to 15 (MNTRGSGSSSSSSSS) are enriched in low complexity. Disordered stretches follow at residues 1–59 (MNTR…GRFL) and 158–178 (SYGH…SGAS). Pro residues predominate over residues 25–37 (PPKPASQPSPPSS). Residues 57–114 (RFLGVRRRPWGRYAAEIRDPTTKERHWLGTFDTAQEAALAYDRAALSMKGAQARTNFV) constitute a DNA-binding region (AP2/ERF). Basic residues predominate over residues 160-171 (GHHHHHHHHHGH).

Belongs to the AP2/ERF transcription factor family. ERF subfamily.

The protein resides in the nucleus. In terms of biological role, required to prevent the formation of axillary meristems within the spikelet meristem and permit the subsequent establishment of floral meristem identity. Mediates the transition from spikelet to floret meristem. Determines the transition from panicle branching to spikelet formation. May specify floral organ identity by regulating the class B genes (Agamous-like genes) MADS6 and MADS17, as well as class E genes MADS1, MADS7 and MADS8 in floral meristem. Possesses transactivation activity. This chain is Ethylene-responsive transcription factor FZP, found in Oryza sativa subsp. japonica (Rice).